Here is a 943-residue protein sequence, read N- to C-terminus: Netrin receptor UNC5B-a (943 aa).

The signal sequence occupies residues 1 to 30 (MYLSRNPSGAALAAILVALILSCNFPSSTA). Residues 31–380 (GIEYSDVLPD…LESTGDVALY (350 aa)) lie on the Extracellular side of the membrane. An Ig-like domain is found at 51–148 (PHFLLEPEDA…AGTTKSKRSY (98 aa)). Cystine bridges form between C72–C133, C84–C131, C177–C228, C261–C298, C265–C302, C276–C288, C317–C351, C321–C356, and C329–C341. The region spanning 150–245 (RIAYLRKNFD…KRRSTTATVI (96 aa)) is the Ig-like C2-type domain. The N-linked (GlcNAc...) asparagine glycan is linked to N225. TSP type-1 domains are found at residues 249-303 (NGGW…TMCP) and 305-357 (DGGW…GLCM). N350 carries an N-linked (GlcNAc...) asparagine glycan. A helical membrane pass occupies residues 381-401 (AGLVVAIFIVIILLMAVGIVV). The Cytoplasmic portion of the chain corresponds to 402 to 943 (YRRNCREFDT…MLVMATDGDC (542 aa)). The ZU5 domain occupies 542–685 (NSVTGTFGSL…LGTYAFVGES (144 aa)). The tract at residues 688 to 836 (RSAIKRLQLA…LEENVKSFDP (149 aa)) is UPA domain. The Death domain maps to 863–941 (KICNSLDAPN…EMMLVMATDG (79 aa)).

Belongs to the unc-5 family. In terms of assembly, interacts (via extracellular domain) with flrt3 (via extracellular domain). Interacts with rnd1. Phosphorylated on cytoplasmic tyrosine residues. In the developing visual system, it is expressed within the developing optic vesicles and later become restricted to the dorsal ciliary marginal zone, a site of retinoblast proliferation and differentiation.

The protein resides in the cell membrane. In terms of biological role, plays a role in cell-cell adhesion during embryonic development. Receptor for netrin required for axon guidance. Mediates axon repulsion of neuronal growth cones in the developing nervous system upon ligand binding. This Xenopus laevis (African clawed frog) protein is Netrin receptor UNC5B-a (unc5b-a).